The primary structure comprises 227 residues: UPF0758 protein lpp2553 (227 aa).

The 124-residue stretch at 102–225 (RLSNTQQTYA…YSIFAENKWV (124 aa)) folds into the MPN domain. Zn(2+)-binding residues include histidine 173, histidine 175, and aspartate 186. Residues 173 to 186 (HNHPSGLSDASQQD) carry the JAMM motif motif.

Belongs to the UPF0758 family.

This Legionella pneumophila (strain Paris) protein is UPF0758 protein lpp2553.